The primary structure comprises 130 residues: uncharacterized protein (130 aa).

This is an uncharacterized protein from Schizosaccharomyces pombe (strain 972 / ATCC 24843) (Fission yeast).